The sequence spans 190 residues: Crossover junction endodeoxyribonuclease RuvC (190 aa).

Active-site residues include D8, E67, and D139. Residues D8, E67, and D139 each coordinate Mg(2+).

Belongs to the RuvC family. As to quaternary structure, homodimer which binds Holliday junction (HJ) DNA. The HJ becomes 2-fold symmetrical on binding to RuvC with unstacked arms; it has a different conformation from HJ DNA in complex with RuvA. In the full resolvosome a probable DNA-RuvA(4)-RuvB(12)-RuvC(2) complex forms which resolves the HJ. Mg(2+) is required as a cofactor.

The protein localises to the cytoplasm. The catalysed reaction is Endonucleolytic cleavage at a junction such as a reciprocal single-stranded crossover between two homologous DNA duplexes (Holliday junction).. Its function is as follows. The RuvA-RuvB-RuvC complex processes Holliday junction (HJ) DNA during genetic recombination and DNA repair. Endonuclease that resolves HJ intermediates. Cleaves cruciform DNA by making single-stranded nicks across the HJ at symmetrical positions within the homologous arms, yielding a 5'-phosphate and a 3'-hydroxyl group; requires a central core of homology in the junction. The consensus cleavage sequence is 5'-(A/T)TT(C/G)-3'. Cleavage occurs on the 3'-side of the TT dinucleotide at the point of strand exchange. HJ branch migration catalyzed by RuvA-RuvB allows RuvC to scan DNA until it finds its consensus sequence, where it cleaves and resolves the cruciform DNA. The sequence is that of Crossover junction endodeoxyribonuclease RuvC from Haemophilus influenzae (strain 86-028NP).